A 123-amino-acid chain; its full sequence is MKRSYNFLSNSEKRKLRNRAKLDKSAERLRISIFKSNRHFYVQLINDVKGITLTSASTLDAKIKDVCKGKVNAETIKQVSSLMVERLSGMKLEQQLTFDRGAYKYTGLVSQFAEALRSSGFEF.

This sequence belongs to the universal ribosomal protein uL18 family. As to quaternary structure, part of the 50S ribosomal subunit; part of the 5S rRNA/L5/L18/L25 subcomplex. Contacts the 5S and 23S rRNAs.

Functionally, this is one of the proteins that bind and probably mediate the attachment of the 5S RNA into the large ribosomal subunit, where it forms part of the central protuberance. The chain is Large ribosomal subunit protein uL18 from Wolbachia pipientis wMel.